Consider the following 418-residue polypeptide: Serine/threonine transporter SstT (418 aa).

9 helical membrane-spanning segments follow: residues 16–36, 45–65, 83–103, 142–162, 192–212, 218–238, 289–309, 317–337, and 364–384; these read SLVSQILIGMIVGILLATLIP, LGTLFVGALKAVAPVLVLLLV, LLILYLFGTFCAAVVAVVASF, ALLEGNYIGILAWAIALGLSL, PLGIMGLVASTFAETGFSALL, LIVLIGCMLFVAFVVNPLIVF, VSIPLGATINMAGAAITITVL, LGISVDLATAVLLSVVATISA, and VAMQVVAVGFIIGVLQDSAET.

Belongs to the dicarboxylate/amino acid:cation symporter (DAACS) (TC 2.A.23) family.

It is found in the cell inner membrane. It catalyses the reaction L-serine(in) + Na(+)(in) = L-serine(out) + Na(+)(out). The enzyme catalyses L-threonine(in) + Na(+)(in) = L-threonine(out) + Na(+)(out). Functionally, involved in the import of serine and threonine into the cell, with the concomitant import of sodium (symport system). The polypeptide is Serine/threonine transporter SstT (Tolumonas auensis (strain DSM 9187 / NBRC 110442 / TA 4)).